A 72-amino-acid chain; its full sequence is Heat-stable enterotoxin A2 (72 aa).

The N-terminal stretch at M1–A19 is a signal peptide. A propeptide spanning residues Q20–M53 is cleaved from the precursor. 3 disulfide bridges follow: C59-C64, C60-C68, and C63-C71.

Belongs to the heat-stable enterotoxin family.

The protein localises to the secreted. Toxin which activates the particulate form of guanylate cyclase and increases cyclic GMP levels within the host intestinal epithelial cells. This chain is Heat-stable enterotoxin A2 (sta2), found in Escherichia coli.